Here is a 667-residue protein sequence, read N- to C-terminus: Fatty acyl-CoA synthetase A (667 aa).

The protein belongs to the ATP-dependent AMP-binding enzyme family.

The protein localises to the endosome membrane. It catalyses the reaction a long-chain fatty acid + ATP + CoA = a long-chain fatty acyl-CoA + AMP + diphosphate. In terms of biological role, long chain fatty acid acyl-CoA synthetases catalyze the formation of a thiester bond between a free fatty acid and coenzyme A during fatty acid metabolic process. May mediate fatty acid retrieval from the lumen of endosomes into the cytoplasm. This is Fatty acyl-CoA synthetase A (fcsA) from Dictyostelium discoideum (Social amoeba).